A 285-amino-acid chain; its full sequence is ATP synthase gamma chain (285 aa).

Belongs to the ATPase gamma chain family. F-type ATPases have 2 components, CF(1) - the catalytic core - and CF(0) - the membrane proton channel. CF(1) has five subunits: alpha(3), beta(3), gamma(1), delta(1), epsilon(1). CF(0) has three main subunits: a, b and c.

It is found in the cell membrane. In terms of biological role, produces ATP from ADP in the presence of a proton gradient across the membrane. The gamma chain is believed to be important in regulating ATPase activity and the flow of protons through the CF(0) complex. In Geobacillus sp. (strain WCH70), this protein is ATP synthase gamma chain.